The following is a 79-amino-acid chain: uncharacterized protein (79 aa).

It is found in the mitochondrion. This is an uncharacterized protein from Marchantia polymorpha (Common liverwort).